Here is a 243-residue protein sequence, read N- to C-terminus: Homeobox protein goosecoid isoform B (243 aa).

The segment at residues 148 to 207 (KRRHRTIFTDEQLEALENLFQETKYPDVGTREQLARRVHLREEKVEVWFKNRRAKWRRQK) is a DNA-binding region (homeobox). Positions 201–243 (AKWRRQKRSSSEESENAQKWNKSSKNSAEKRDEQAKSDLDSDS) are disordered. The span at 217-226 (AQKWNKSSKN) shows a compositional bias: polar residues. Basic and acidic residues predominate over residues 227 to 243 (SAEKRDEQAKSDLDSDS).

It belongs to the paired homeobox family. Bicoid subfamily.

The protein localises to the nucleus. Plays a central role in executing Spemann's organizer phenomenon (the dorsal blastopore lip of the early Xenopus laevis gastrula can organize a complete secondary body axis when transplanted to another embryo). In Xenopus laevis (African clawed frog), this protein is Homeobox protein goosecoid isoform B (gsc-b).